Consider the following 275-residue polypeptide: Bis(5'-nucleosyl)-tetraphosphatase, symmetrical (275 aa).

The protein belongs to the Ap4A hydrolase family.

The catalysed reaction is P(1),P(4)-bis(5'-adenosyl) tetraphosphate + H2O = 2 ADP + 2 H(+). In terms of biological role, hydrolyzes diadenosine 5',5'''-P1,P4-tetraphosphate to yield ADP. The chain is Bis(5'-nucleosyl)-tetraphosphatase, symmetrical from Hamiltonella defensa subsp. Acyrthosiphon pisum (strain 5AT).